Here is a 201-residue protein sequence, read N- to C-terminus: Dephospho-CoA kinase (201 aa).

The region spanning 4-201 (SVGLTGNIAS…KYLREAKIKQ (198 aa)) is the DPCK domain. ATP is bound at residue 12–17 (ASGKST).

It belongs to the CoaE family.

The protein localises to the cytoplasm. It catalyses the reaction 3'-dephospho-CoA + ATP = ADP + CoA + H(+). It functions in the pathway cofactor biosynthesis; coenzyme A biosynthesis; CoA from (R)-pantothenate: step 5/5. Functionally, catalyzes the phosphorylation of the 3'-hydroxyl group of dephosphocoenzyme A to form coenzyme A. This chain is Dephospho-CoA kinase, found in Legionella pneumophila (strain Paris).